A 638-amino-acid polypeptide reads, in one-letter code: Probable glycerol-3-phosphate dehydrogenase, mitochondrial (638 aa).

D100 to E128 contributes to the FAD binding site.

It belongs to the FAD-dependent glycerol-3-phosphate dehydrogenase family. FAD is required as a cofactor.

The protein localises to the mitochondrion. It carries out the reaction a quinone + sn-glycerol 3-phosphate = dihydroxyacetone phosphate + a quinol. It functions in the pathway polyol metabolism; glycerol degradation via glycerol kinase pathway; glycerone phosphate from sn-glycerol 3-phosphate (anaerobic route): step 1/1. The polypeptide is Probable glycerol-3-phosphate dehydrogenase, mitochondrial (Dictyostelium discoideum (Social amoeba)).